Here is a 708-residue protein sequence, read N- to C-terminus: F-box protein MAX2 homolog A (708 aa).

The F-box domain occupies 2-49 (ATQLNDLPDVILSNIIAAVTDVRSRNSTSFVCRKWLVLERSTRVSLTL).

Part of a putative SCF (SKP1/Cullin/F-box) ubiquitin ligase complex. Interacts with DAD2. Interacts with KAI2IA in the presence of (-)-germacrene D. As to expression, mainly expressed in fully expanded leaves, lateral roots, axillary and shoot apex, and, to a lower extent, in internodes and nodes.

It is found in the nucleus. Its function is as follows. Component of SCF(ASK-cullin-F-box) E3 ubiquitin ligase complexes, which may mediate the ubiquitination and subsequent proteasomal degradation of target proteins. Is necessary for responses to strigolactones and may be involved in the ubiquitin-mediated degradation of specific proteins that activate axillary growth. Targets probably SMAX1A to degradation upon the formation of an E3 SCF ubiquitin ligase complex (ASK-cullin-F-box) containing MAX2A and KAI2IA in response to (-)-germacrene D in the stigma. In Petunia hybrida (Petunia), this protein is F-box protein MAX2 homolog A.